A 266-amino-acid polypeptide reads, in one-letter code: Transcription regulator FGM4 (266 aa).

Residues 17–36 (KTQNRLAKRKSRIHAGKQQG) form a disordered region. Residues 18–31 (TQNRLAKRKSRIHA) show a composition bias toward basic residues. 2 ANK repeats span residues 183 to 212 (KPGSPLHIASAMGHLKVVKTLITYGANVNE) and 216 to 245 (AGYSPIHYATRNNHTAIVALLLEKGADWSY).

It is found in the nucleus. In terms of biological role, transcription regulator; part of the Fg3_54/C64 gene cluster that mediates the biosynthesis of the octapeptide fusaoctaxin A, a virulence factor that is required for cell-to-cell invasiveness of plant host. Positively regulates the expression the Fg3_54/C64 gene cluster. This Gibberella zeae (strain ATCC MYA-4620 / CBS 123657 / FGSC 9075 / NRRL 31084 / PH-1) (Wheat head blight fungus) protein is Transcription regulator FGM4.